Consider the following 231-residue polypeptide: Class A basic helix-loop-helix protein 9 (231 aa).

The bHLH domain occupies 61-113; the sequence is ARRMAANVRERKRILDYNEAFNALRRALQHDLGGKRLSKIATLRRAIHRITAL. Positions 135 to 168 are disordered; the sequence is QAAQGSSTGNSSFSVPRSAPSPIAPSLTRRDIAS. Residues 137 to 149 show a composition bias toward polar residues; it reads AQGSSTGNSSFSV.

As to quaternary structure, heterodimer. Efficient DNA binding requires dimerization with another bHLH protein. Interacts with TCF3, TCF4, and TCF12.

Its subcellular location is the nucleus. In terms of biological role, transcription factor, which play a role in limb development. Is an essential player in the regulatory network governing transcription of genes implicated in limb morphogenesis. The sequence is that of Class A basic helix-loop-helix protein 9 (Bhlha9) from Mus musculus (Mouse).